The primary structure comprises 156 residues: Snaclec alboaggregin-B subunit alpha (156 aa).

The first 23 residues, 1–23, serve as a signal peptide directing secretion; sequence MGRFIFVSFGLLVVFLSLSGTGA. One can recognise a C-type lectin domain in the interval 24-151; the sequence is DCPSDWSSFK…CEQKHIFMCK (128 aa). Intrachain disulfides connect cysteine 25–cysteine 36, cysteine 53–cysteine 150, and cysteine 125–cysteine 142.

It belongs to the snaclec family. As to quaternary structure, heterodimer of subunits alpha and beta; disulfide-linked. Expressed by the venom gland.

Its subcellular location is the secreted. Weakly agglutinates platelets at high doses by binding to GPIbalpha (GP1BA). This chain is Snaclec alboaggregin-B subunit alpha, found in Trimeresurus albolabris (White-lipped pit viper).